A 739-amino-acid chain; its full sequence is Platelet endothelial cell adhesion molecule (739 aa).

The signal sequence occupies residues 1–27 (MQLRWTQRGMMWLGALLTLLLCSSLKG). Topologically, residues 28–599 (QENSFTINSI…TVRVYLPLEK (572 aa)) are extracellular. Ig-like C2-type domains follow at residues 35–120 (NSIH…EKTT), 145–213 (GGVV…IFSG), and 236–315 (PKFH…SKVS). 3 N-linked (GlcNAc...) asparagine glycosylation sites follow: N52, N84, and N151. An intrachain disulfide couples C57 to C109. Cystine bridges form between C152–C206 and C256–C304. N-linked (GlcNAc...) asparagine glycosylation is found at N301, N320, N356, N371, N435, N446, N453, N550, and N578. Ig-like C2-type domains lie at 328–403 (PKLE…VQIT), 424–493 (GQTI…EVLR), and 499–590 (PVDE…NTLT). 3 cysteine pairs are disulfide-bonded: C347/C386, C431/C476, and C522/C571. Residues 600–618 (GLIAVVVIGVIIVTLVLGA) traverse the membrane as a helical segment. Residues 619–739 (KCYFLKKAKA…SRTEGSLDGS (121 aa)) are Cytoplasmic-facing. A lipid anchor (S-palmitoyl cysteine) is attached at C620. 2 consecutive short sequence motifs (ITIM motif) follow at residues 687 to 692 (VEYTEV) and 712 to 717 (TVYSEI). Phosphotyrosine; by FER occurs at positions 689 and 714. The membrane-bound segment which detaches upon phosphorylation stretch occupies residues 708–730 (TETETVYSEIRKADPDFVENRYS). The may play a role in cytoprotective signaling stretch occupies residues 722 to 739 (PDFVENRYSRTEGSLDGS). Phosphoserine occurs at positions 730 and 735.

In terms of assembly, trans-homodimer (via Ig-like C2-type 1 and Ig-like C2-type 2 domains); trans-homodimerization is required for cell-cell interaction. Forms a complex with BDKRB2 and GNAQ. Interacts with BDKRB2 and GNAQ. Interacts with PTPN11; Tyr-714 is critical for PTPN11 recruitment. Interacts with FER. Interacts with CD177; the interaction is Ca(2+)-dependent; the interaction is direct. In terms of processing, phosphorylated on Ser and Tyr residues by src kinases after cellular activation. Upon activation, phosphorylated on Ser-730 which probably initiates the dissociation of the membrane-interaction segment (residues 708-730) from the cell membrane allowing the sequential phosphorylation of Tyr-714 and Tyr-689. Constitutively phosphorylated on Ser-735 in resting platelets. Phosphorylated on tyrosine residues by FER and FES in response to FCER1 activation. In endothelial cells Fyn mediates mechanical-force (stretch or pull) induced tyrosine phosphorylation. Post-translationally, palmitoylation by ZDHHC21 is necessary for cell surface expression in endothelial cells and enrichment in membrane rafts.

It is found in the cell membrane. The protein resides in the membrane raft. It localises to the cell junction. Functionally, cell adhesion molecule which is required for leukocyte transendothelial migration (TEM) under most inflammatory conditions. Tyr-689 plays a critical role in TEM and is required for efficient trafficking of PECAM1 to and from the lateral border recycling compartment (LBRC) and is also essential for the LBRC membrane to be targeted around migrating leukocytes. Trans-homophilic interaction may play a role in endothelial cell-cell adhesion via cell junctions. Heterophilic interaction with CD177 plays a role in transendothelial migration of neutrophils. Homophilic ligation of PECAM1 prevents macrophage-mediated phagocytosis of neighboring viable leukocytes by transmitting a detachment signal. Promotes macrophage-mediated phagocytosis of apoptotic leukocytes by tethering them to the phagocytic cells; PECAM1-mediated detachment signal appears to be disabled in apoptotic leukocytes. Modulates bradykinin receptor BDKRB2 activation. Regulates bradykinin- and hyperosmotic shock-induced ERK1/2 activation in endothelial cells. Induces susceptibility to atherosclerosis. In Bos taurus (Bovine), this protein is Platelet endothelial cell adhesion molecule (PECAM1).